Consider the following 720-residue polypeptide: Engulfment and cell motility protein 2 (720 aa).

Tyrosine 48 is modified (phosphotyrosine). In terms of domain architecture, ELMO spans 311–485; it reads AQRDIIFELR…VVREQITRAL (175 aa). A Phosphoserine modification is found at serine 503. A PH domain is found at 553–674; it reads SSFRKIGNRR…LLGKDMSSEL (122 aa). Positions 700–707 match the SH3-binding motif; it reads PEAPPPIP. Tyrosine 717 is modified (phosphotyrosine).

In terms of assembly, interacts with the SH3-domain of DOCK1 via its SH3-binding site. Probably part of a complex with DOCK1 and RAC1. Probably part of a complex with DOCK1 and CRK isoform CRK-II. Interacts with ARHGEF16, DOCK4 and EPHA2; mediates activation of RAC1 by EPHA2. Interacts with ADGRB3. Interacts with AUTS2; the interaction is direct. In terms of tissue distribution, widely expressed, with a higher expression in skeletal muscle, kidney and placenta.

The protein localises to the cytoplasm. The protein resides in the cytosol. Its subcellular location is the membrane. Functionally, involved in cytoskeletal rearrangements required for phagocytosis of apoptotic cells and cell motility. Acts in association with DOCK1 and CRK. Was initially proposed to be required in complex with DOCK1 to activate Rac Rho small GTPases. May enhance the guanine nucleotide exchange factor (GEF) activity of DOCK1. This chain is Engulfment and cell motility protein 2 (ELMO2), found in Homo sapiens (Human).